Consider the following 248-residue polypeptide: Ubiquinone biosynthesis O-methyltransferase (248 aa).

S-adenosyl-L-methionine-binding residues include Arg41, Gly72, Asp93, and Met136.

It belongs to the methyltransferase superfamily. UbiG/COQ3 family.

The catalysed reaction is a 3-demethylubiquinol + S-adenosyl-L-methionine = a ubiquinol + S-adenosyl-L-homocysteine + H(+). It carries out the reaction a 3-(all-trans-polyprenyl)benzene-1,2-diol + S-adenosyl-L-methionine = a 2-methoxy-6-(all-trans-polyprenyl)phenol + S-adenosyl-L-homocysteine + H(+). The protein operates within cofactor biosynthesis; ubiquinone biosynthesis. In terms of biological role, O-methyltransferase that catalyzes the 2 O-methylation steps in the ubiquinone biosynthetic pathway. This chain is Ubiquinone biosynthesis O-methyltransferase, found in Brucella abortus (strain 2308).